Consider the following 134-residue polypeptide: Translation initiation factor 5A (134 aa).

Lys36 carries the hypusine modification.

The protein belongs to the eIF-5A family.

The protein resides in the cytoplasm. Functionally, functions by promoting the formation of the first peptide bond. The chain is Translation initiation factor 5A (eIF5A) from Korarchaeum cryptofilum (strain OPF8).